Reading from the N-terminus, the 57-residue chain is MAVPKRRTSKTRKNKRRTHFKISVPGMTECPNCGEYKLSHRVCKNCGSYNGEEVAAK.

This sequence belongs to the bacterial ribosomal protein bL32 family.

The chain is Large ribosomal subunit protein bL32 from Staphylococcus aureus (strain MSSA476).